Reading from the N-terminus, the 312-residue chain is Mas-related G-protein coupled receptor member B3 (312 aa).

The Extracellular segment spans residues 1–31 (MALRTSLITTTAPDKTSLPISICIIKFQVMN). The helical transmembrane segment at 32-52 (LLSITISPVGMVLNIIVLWFL) threads the bilayer. At 53 to 67 (GFQICRNAFSAYILN) the chain is on the cytoplasmic side. A helical membrane pass occupies residues 68-88 (LAVADFLFLCSHSIFSFLIVC). At 89–106 (KLHYFLFYIRQLLDTVTM) the chain is on the extracellular side. A helical membrane pass occupies residues 107–127 (FAYVFGLSITTIISIECCLSI). Topologically, residues 128 to 140 (MWPIWYHCQRPRH) are cytoplasmic. A helical transmembrane segment spans residues 141–161 (TSAVICVLLWALSLLFPALQM). The Extracellular segment spans residues 162–180 (EKCSVLFNTFEYSWCGIIN). Residues 181 to 201 (IISGAWLVVLFVVLCGFSLIL) form a helical membrane-spanning segment. The Cytoplasmic segment spans residues 202-220 (LLRISCGSQQIPVTRLNVT). Residues 221-241 (IALRVLLLLIFGIPFGIFWIV) form a helical membrane-spanning segment. Residues 242 to 259 (DKWNEENFFVRACGFSHH) are Extracellular-facing. The chain crosses the membrane as a helical span at residues 260–280 (ILYVYCINICVNATIYFLVGS). Residues 281 to 312 (IRHGKFQKMTLKLILQRAIQGTPEEEGGERGP) lie on the Cytoplasmic side of the membrane.

Belongs to the G-protein coupled receptor 1 family. Mas subfamily.

The protein localises to the membrane. Orphan receptor. Probably involved in the function of nociceptive neurons. May regulate nociceptor function and/or development, including the sensation or modulation of pain. The chain is Mas-related G-protein coupled receptor member B3 (Mrgprb3) from Mus musculus (Mouse).